The primary structure comprises 237 residues: Ribosomal RNA large subunit methyltransferase E (237 aa).

Residues Gly76, Trp78, Asp99, Asp115, and Asp139 each contribute to the S-adenosyl-L-methionine site. Lys179 acts as the Proton acceptor in catalysis.

The protein belongs to the class I-like SAM-binding methyltransferase superfamily. RNA methyltransferase RlmE family.

The protein resides in the cytoplasm. It carries out the reaction uridine(2552) in 23S rRNA + S-adenosyl-L-methionine = 2'-O-methyluridine(2552) in 23S rRNA + S-adenosyl-L-homocysteine + H(+). In terms of biological role, specifically methylates the uridine in position 2552 of 23S rRNA at the 2'-O position of the ribose in the fully assembled 50S ribosomal subunit. The protein is Ribosomal RNA large subunit methyltransferase E of Rhodopseudomonas palustris (strain TIE-1).